The following is a 108-amino-acid chain: Probable 4-amino-4-deoxy-L-arabinose-phosphoundecaprenol flippase subunit ArnE (108 aa).

3 consecutive transmembrane segments (helical) span residues 36-56 (SLWL…LVLQ), 58-78 (LDVG…TLAG), and 85-105 (PVDV…FQLG).

The protein belongs to the ArnE family. Heterodimer of ArnE and ArnF.

It localises to the cell inner membrane. It functions in the pathway bacterial outer membrane biogenesis; lipopolysaccharide biosynthesis. Its function is as follows. Translocates 4-amino-4-deoxy-L-arabinose-phosphoundecaprenol (alpha-L-Ara4N-phosphoundecaprenol) from the cytoplasmic to the periplasmic side of the inner membrane. The chain is Probable 4-amino-4-deoxy-L-arabinose-phosphoundecaprenol flippase subunit ArnE from Pseudomonas syringae pv. syringae (strain B728a).